Reading from the N-terminus, the 156-residue chain is 2-C-methyl-D-erythritol 2,4-cyclodiphosphate synthase (156 aa).

The a divalent metal cation site is built by Asp-10 and His-12. 4-CDP-2-C-methyl-D-erythritol 2-phosphate contacts are provided by residues 10–12 (DSH) and 36–37 (HS). Residue His-44 participates in a divalent metal cation binding. 4-CDP-2-C-methyl-D-erythritol 2-phosphate-binding positions include 58–60 (DIG) and 63–67 (FKDTD).

Belongs to the IspF family. In terms of assembly, homotrimer. The cofactor is a divalent metal cation.

The catalysed reaction is 4-CDP-2-C-methyl-D-erythritol 2-phosphate = 2-C-methyl-D-erythritol 2,4-cyclic diphosphate + CMP. It participates in isoprenoid biosynthesis; isopentenyl diphosphate biosynthesis via DXP pathway; isopentenyl diphosphate from 1-deoxy-D-xylulose 5-phosphate: step 4/6. Its function is as follows. Involved in the biosynthesis of isopentenyl diphosphate (IPP) and dimethylallyl diphosphate (DMAPP), two major building blocks of isoprenoid compounds. Catalyzes the conversion of 4-diphosphocytidyl-2-C-methyl-D-erythritol 2-phosphate (CDP-ME2P) to 2-C-methyl-D-erythritol 2,4-cyclodiphosphate (ME-CPP) with a corresponding release of cytidine 5-monophosphate (CMP). This is 2-C-methyl-D-erythritol 2,4-cyclodiphosphate synthase from Aquifex aeolicus (strain VF5).